The sequence spans 349 residues: Xylitol-binding protein (349 aa).

Residues 1-22 (MNITSKIGAIAAAGAVGLGLTA) form the signal peptide. Residue Cys23 is the site of N-palmitoyl cysteine attachment. Cys23 carries the S-diacylglycerol cysteine lipid modification. Residues Tyr42, Asn121, Arg173, Asn224, Asp249, and Gln269 each contribute to the xylitol site.

Belongs to the bacterial solute-binding protein 2 family.

The protein localises to the cell membrane. Part of an ABC transporter complex likely involved in xylitol import. Binds xylitol. This chain is Xylitol-binding protein, found in Mycolicibacterium smegmatis (strain ATCC 700084 / mc(2)155) (Mycobacterium smegmatis).